A 434-amino-acid chain; its full sequence is MEGAELAGKILSTWLTLVLGFILLPSVFGVSLGISEIYMKILVKTLEWATIRIEKGTPKESILKNSASVGIIQRDESPMEKGLSGLRGRDFELSDVFYFSKKGLEAIVEDEVTQRFSSEELVSWNLLTRTNVNFQYISLRLTMVWVLGVIVRYCVLLPLRVTLAFIGISLLVIGTTLVGQLPDSSLKNWLSELVHLTCCRICVRALSGTIHYHNKQYRPQKGGICVANHTSPIDVLILTTDGCYAMVGQVHGGLMGIIQRAMVKACPHVWFERSEMKDRHLVTKRLKEHIADKKKLPILIFPEGTCINNTSVMMFKKGSFEIGGTIHPVAIKYNPQFGDAFWNSSKYNMVSYLLRMMTSWAIVCDVWYMPPMTREEGEDAVQFANRVKSAIAIQGGLTELPWDGGLKRAKVKDIFKEEQQKNYSKMIVGNGSLS.

The helical transmembrane segment at 14 to 34 threads the bilayer; the sequence is WLTLVLGFILLPSVFGVSLGI. Phosphoserine occurs at positions 68 and 77. The next 2 membrane-spanning stretches (helical) occupy residues 137 to 157 and 161 to 181; these read ISLRLTMVWVLGVIVRYCVLL and VTLAFIGISLLVIGTTLVGQL. The HXXXXD motif signature appears at 229–234; it reads HTSPID.

The protein belongs to the 1-acyl-sn-glycerol-3-phosphate acyltransferase family. In terms of tissue distribution, widely expressed. Expressed in liver, kidney, testis, brain, heart, skeletal muscle, thyroid, prostate, thymus and placenta. Also expressed lung and adipose tissue.

It localises to the endoplasmic reticulum membrane. The enzyme catalyses sn-glycerol 3-phosphate + an acyl-CoA = a 1-acyl-sn-glycero-3-phosphate + CoA. It catalyses the reaction a 1-acyl-sn-glycero-3-phosphate + an acyl-CoA = a 1,2-diacyl-sn-glycero-3-phosphate + CoA. The catalysed reaction is dodecanoyl-CoA + sn-glycerol 3-phosphate = 1-dodecanoyl-sn-glycerol 3-phosphate + CoA. It carries out the reaction sn-glycerol 3-phosphate + hexadecanoyl-CoA = 1-hexadecanoyl-sn-glycero-3-phosphate + CoA. The enzyme catalyses sn-glycerol 3-phosphate + (9Z)-octadecenoyl-CoA = 1-(9Z-octadecenoyl)-sn-glycero-3-phosphate + CoA. It catalyses the reaction (9Z,12Z)-octadecadienoyl-CoA + sn-glycerol 3-phosphate = 1-(9Z,12Z)-octadecadienoyl-sn-glycero-3-phosphate + CoA. The catalysed reaction is 1-tetradecanoyl-sn-glycerol 3-phosphate + (9Z)-octadecenoyl-CoA = 1-tetradecanoyl-2-(9Z)-octadecenoyl-sn-glycero-3-phosphate + CoA. It carries out the reaction 1-hexadecanoyl-sn-glycero-3-phosphate + (9Z)-octadecenoyl-CoA = 1-hexadecanoyl-2-(9Z-octadecenoyl)-sn-glycero-3-phosphate + CoA. The enzyme catalyses 1-(9Z-octadecenoyl)-sn-glycero-3-phosphate + (9Z)-octadecenoyl-CoA = 1,2-di-(9Z-octadecenoyl)-sn-glycero-3-phosphate + CoA. It catalyses the reaction 1-(6Z,9Z,12Z-octadecatrienoyl)-sn-glycero-3-phosphate + (9Z)-octadecenoyl-CoA = (6Z,9Z,12Z)-octadecatrienoyl-2-(9Z)-octadecenoyl-sn-glycero-3-phosphate + CoA. The catalysed reaction is 1-(9Z,12Z,15Z)-octadecatrienoyl-sn-glycero-3-phosphate + (9Z)-octadecenoyl-CoA = 1-(9Z,12Z,15Z)-octadecatrienoyl-2-(9Z)-octadecenoyl-sn-glycero-3-phosphate + CoA. It carries out the reaction 1-(9Z-octadecenoyl)-sn-glycero-3-phosphate + tetradecanoyl-CoA = 1-(9Z)-octadecenoyl-2-tetradecanoyl-sn-glycero-3-phosphate + CoA. The enzyme catalyses 1-(9Z-octadecenoyl)-sn-glycero-3-phosphate + hexadecanoyl-CoA = 1-(9Z)-octadecenoyl-2-hexadecanoyl-sn-glycero-3-phosphate + CoA. It catalyses the reaction 1-(9Z-octadecenoyl)-sn-glycero-3-phosphate + octadecanoyl-CoA = 1-(9Z-octadecenoyl)-2-octadecanoyl-sn-glycero-3-phosphate + CoA. The catalysed reaction is 1-(9Z-octadecenoyl)-sn-glycero-3-phosphate + (9Z,12Z)-octadecadienoyl-CoA = 1-(9Z)-octadecenoyl-2-(9Z,12Z)-octadecadienoyl-sn-glycero-3-phosphate + CoA. It carries out the reaction 1-(5Z,8Z,11Z,14Z-eicosatetraenoyl)-sn-glycero-3-phosphate + (9Z)-octadecenoyl-CoA = 1-(5Z,8Z,11Z,14Z)-eicosatetraenoyl-2-(9Z)-octadecenoyl-sn-glycero-3-phosphate + CoA. It participates in glycerolipid metabolism; triacylglycerol biosynthesis. It functions in the pathway phospholipid metabolism; CDP-diacylglycerol biosynthesis; CDP-diacylglycerol from sn-glycerol 3-phosphate: step 1/3. Inhibited by N-ethylmaleimide (NEM). Functionally, converts glycerol-3-phosphate to 1-acyl-sn-glycerol-3-phosphate (lysophosphatidic acid or LPA) by incorporating an acyl moiety at the sn-1 position of the glycerol backbone. Also converts LPA into 1,2-diacyl-sn-glycerol-3-phosphate (phosphatidic acid or PA) by incorporating an acyl moiety at the sn-2 position of the glycerol backbone. Protects cells against lipotoxicity. This Homo sapiens (Human) protein is Glycerol-3-phosphate acyltransferase 3.